Consider the following 177-residue polypeptide: FCS-Like Zinc finger 1 (177 aa).

Positions 22-46 (SLSEMEAGFSGNNNNSNNHGNPQNG) are enriched in low complexity. Disordered stretches follow at residues 22-49 (SLSE…GVVS) and 134-177 (ERDE…VAAA). The FLZ-type zinc finger occupies 96–140 (HFLDSCFLCKKPLGDNRDIYMYRGDTPFCSEECRQEQIERDEAKE). 2 stretches are compositionally biased toward basic and acidic residues: residues 134–143 (ERDEAKEKKQ) and 154–168 (RRKE…RDYA).

The protein belongs to the FLZ family. As to quaternary structure, interacts with KIN10 and KIN11 via its FLZ-type zinc finger domain. Interacts with KINB1, KINB2 and KINB3 via its N-terminal part. Interacts with DSP3 and BBX21 via its FLZ-type zinc finger domain. Forms heterodimer with FLZ7 and FLZ15 in vitro.

It is found in the nucleus. The protein resides in the cytoplasm. In terms of biological role, may act as an adapter to facilitate the interaction of SnRK1 complex with effector proteins, conferring tissue- and stimulus-type specific differences in the SnRK1 regulation pathway. The polypeptide is FCS-Like Zinc finger 1 (Arabidopsis thaliana (Mouse-ear cress)).